Reading from the N-terminus, the 806-residue chain is Protein translocase subunit SecA (806 aa).

Residues Gln-87, 105 to 109 (GEGKT), and Asp-493 each bind ATP.

The protein belongs to the SecA family. Monomer and homodimer. Part of the essential Sec protein translocation apparatus which comprises SecA, SecYEG and auxiliary proteins SecDF. Other proteins may also be involved.

The protein resides in the cell membrane. It is found in the cytoplasm. It catalyses the reaction ATP + H2O + cellular proteinSide 1 = ADP + phosphate + cellular proteinSide 2.. Functionally, part of the Sec protein translocase complex. Interacts with the SecYEG preprotein conducting channel. Has a central role in coupling the hydrolysis of ATP to the transfer of proteins into and across the cell membrane, serving as an ATP-driven molecular motor driving the stepwise translocation of polypeptide chains across the membrane. The protein is Protein translocase subunit SecA of Mycoplasma genitalium (strain ATCC 33530 / DSM 19775 / NCTC 10195 / G37) (Mycoplasmoides genitalium).